The following is a 562-amino-acid chain: MNNNKRPLYIPYAGPALLSTPLLNKGSAFSTTERKYFNLEGLLPEAIESIEEQTGRAYKQYQNFENDMDKHIYLRNIQDTNETLFYRLVQNHISEMMPIIYTPTVGAACENFSNIYRRGRGLFISYENKNRIDDLLNNAANQNVKVIVVTDGERILGLGDQGIGGMGIPIGKLALYTACGGISPAHTLPIVLDVGTNNPQRLADPMYMGWRHPRVTGDEYADFVEDFIQAVQRRWPEALVQFEDFAQKNAMPLLERYKNRICCFNDDIQGTAAVTVGSLLAACKAAGSSLSEQRVTFLGAGSAGCGIAEAIIAQMVSEGISDAQARSQVYMVDRWGLLQEGMPNLLDFQQRLVQKAENTKDWVSEEPNFSLVDVMRNAKPTVLIGVSGAPGLFSKEVIQEMHKHCERPIVFPLSNPTSRVEATPNDIIRWTDGQALVATGSPFDPVAHNGQTYPIAQCNNSFIFPGIGLGVLAIKATRVTDEMLMESSRALAECSPLAIHGTGALLPPLEEIHSVSKRIAFAVAKKAIEQGHALEITDEALQQKIESYFWKPVYRRYKRTAF.

Residue Y101 is the Proton donor of the active site. R154 contacts NAD(+). The active-site Proton acceptor is the K172. Residues E243, D244, and D267 each coordinate a divalent metal cation. NAD(+)-binding residues include D267 and N415.

This sequence belongs to the malic enzymes family. As to quaternary structure, homotetramer. Mg(2+) serves as cofactor. Requires Mn(2+) as cofactor.

It catalyses the reaction (S)-malate + NAD(+) = pyruvate + CO2 + NADH. It carries out the reaction oxaloacetate + H(+) = pyruvate + CO2. The polypeptide is NAD-dependent malic enzyme (Aliivibrio fischeri (strain ATCC 700601 / ES114) (Vibrio fischeri)).